We begin with the raw amino-acid sequence, 201 residues long: Putative ankyrin repeat protein R868 (201 aa).

2 ANK repeats span residues 125–154 (YENN…NCYF) and 156–188 (KAKK…DYNF).

This is Putative ankyrin repeat protein R868 from Acanthamoeba polyphaga (Amoeba).